Here is a 1151-residue protein sequence, read N- to C-terminus: MDQNANQKKRFFKDELESSIETTLTDKSSFLFEPQVDAIQEENANDPEEQIAQGTQESPFIEQLRAVLPTIRLEVALALEEKYRDIDDGLDLAISEYFDQYQTGNDDAPPSSLELQHSQEVLTVPDNEEKDTDLQLVSVKRKREDDFMQSSQSKKPQRANSSWKKFVGSLQVTVMVTRPTMRPVPYGTPLIFKRSNNNVPLKKIYEQLNKKKTGLAAFVKIYSANDEREIGRVPEDIARIVFPLLHRNEVHFKLTMIYPGDKRLSIGDNIIIQMDSFLTSTLFNRKENPTFSTQNGNGRERFGAIVETEQELEERNIRMGLIMLFDKIKLRPVKDEAKFLEKLKQDGDDNEIVDLEDDESFGNFLSQEPLNDELPTQHQEDTMNINQLTSFYKATQSSKQLNSLIPTTPPPELVKVELRKYQKQGLTWMLRREGISIGHDNEDKSEDDTTLLNPLWRQFQWPRNMSWHNQSTGSENDNSNPKLIFFYGNLHTGEFSLERPTMNSFKNGGILSDEMGLGKTISALSLVLMRPKDEHTTSQSLFHQESSNLSSDDVIEIKEPERSYAYKTTLIIVPMSLLTQWRDEFDKVNNNAGLTCELYYGGNVSSLKSLLIKRKNPPTVVLTTYGIVQNEWTKLSKDGTNIRSLGRTSGIFSIEFFRIILDEGHTIRNKSTITSKAVLELSSKYRWILTGTPIINRLDDLYSLVKFLKLEPWSQIGYWKQFITNPFEERNFKQAFDVVNAIMEPVLLRRTKQMKDTDGNPLVQLPPKEIVIEKLQLSKKQKLIYEEFLQRAEKTFRSGLQSGDLLKKYSTILVHILRLRQVCCDSNLIGTLDENDEDLSSGNNKLITESVDVKTLIPDTEEEEDEVPPFENDELDKLIESVEAKFIDSNQLIPVECSICTAEPIESSSAVVTECEHVFCKECLEEYGNFQKEKSLQQKCPNCRRDINLNRCLAFEKGSDGILKLIHFDRKERPAKLNALIRHLQQLQDSSAGEQVVVFSQFSSYLDILESQLNEVYSSNKLKVYKFDGRLSLKERTAVLEDFKVKDYAVQKVLLLSLKAGGVGLNLTCASYAFMMDPWWSPSMEDQAIDRIHRIGQTNSVKVIRFVIDGSIEEKMLRIQDRKRTLGEAMDTDEDERRKRRIEEIQMLFES.

2 disordered regions span residues 35–54 (QVDA…IAQG) and 142–161 (KRED…RANS). The segment covering 39–49 (IQEENANDPEE) has biased composition (acidic residues). Positions 148-161 (MQSSQSKKPQRANS) are enriched in polar residues. The 212-residue stretch at 500-711 (PTMNSFKNGG…YSLVKFLKLE (212 aa)) folds into the Helicase ATP-binding domain. Position 513–520 (513–520 (DEMGLGKT)) interacts with ATP. Positions 662-665 (DEGH) match the DEGH box motif. The RING-type zinc-finger motif lies at 897-944 (CSICTAEPIESSSAVVTECEHVFCKECLEEYGNFQKEKSLQQKCPNCR). In terms of domain architecture, Helicase C-terminal spans 979–1146 (ALIRHLQQLQ…RRKRRIEEIQ (168 aa)).

Belongs to the SNF2/RAD54 helicase family.

The protein localises to the cytoplasm. It is found in the nucleus. Functionally, probable helicase, member of the UBC2/RAD6 epistasis group. Functions with DNA repair protein RAD18 in error-free postreplication DNA repair. Involved in the maintenance of wild-type rates of instability of simple repetitive sequences such as poly(GT) repeats. Seems to be involved in maintaining a balance which acts in favor of error-prone non-homologous joining during DNA double-strand breaks repairs. The protein is DNA repair protein RAD5 (RAD5) of Candida glabrata (strain ATCC 2001 / BCRC 20586 / JCM 3761 / NBRC 0622 / NRRL Y-65 / CBS 138) (Yeast).